A 308-amino-acid polypeptide reads, in one-letter code: Ribosomal protein L11 methyltransferase (308 aa).

The S-adenosyl-L-methionine site is built by Thr-157, Gly-178, Asp-200, and Asn-243.

Belongs to the methyltransferase superfamily. PrmA family.

It is found in the cytoplasm. It carries out the reaction L-lysyl-[protein] + 3 S-adenosyl-L-methionine = N(6),N(6),N(6)-trimethyl-L-lysyl-[protein] + 3 S-adenosyl-L-homocysteine + 3 H(+). Methylates ribosomal protein L11. The protein is Ribosomal protein L11 methyltransferase of Desulforamulus reducens (strain ATCC BAA-1160 / DSM 100696 / MI-1) (Desulfotomaculum reducens).